The chain runs to 414 residues: MQPASPVSGDAGPVAEAVPPRGAPQVLVRRRSVPFSPDSPLAPGSRGGGERRSTFREDVSHAAAETYLVTRLAFILLRYLGVGYRWISQLAALIIYAILLMPGFIRVGYYYFFSRQVLRSVIYGDQPRNRLDLYIPRDPKKPSPVVAFVTGGAWIIGYKAWGALLGRRLAERGIIVACIDYRNFPQGTISDMVSDASDGISFVCETVGAYGGDPNQIYLMGQSAGAHIAACALLEQAAKESRGEQISWSVTQIKAYFGLSGGYNIENLVDHFHERGLYRSIFLSIMEGKKSLPHFSPETVAKKLCPETIALLPQIVLLHGTDDYSIPFSASETFAGVLKQAGAKAKLLLYEGKTHTDVFLQDPLRGGRDKLVEDVISVIHADDADAREKDALAPIPGRLVSEWQIKLAHRISPF.

The interval 1 to 54 is disordered; it reads MQPASPVSGDAGPVAEAVPPRGAPQVLVRRRSVPFSPDSPLAPGSRGGGERRST. 2 helical membrane-spanning segments follow: residues 90–110 and 145–165; these read LAAL…VGYY and VVAF…GALL. Substrate is bound by residues 151-153 and 222-224; these read GGA and QSA. Catalysis depends on residues S223, D323, and H355.

The protein belongs to the AB hydrolase superfamily. Isoprenylcysteine methylesterase family.

It localises to the endoplasmic reticulum membrane. It is found in the golgi apparatus membrane. The enzyme catalyses [protein]-C-terminal S-[(2E,6E)-farnesyl]-L-cysteine methyl ester + H2O = [protein]-C-terminal S-[(2E,6E)-farnesyl]-L-cysteine + methanol + H(+). Catalyzes the demethylation of isoprenylcysteine methylesters. This is Probable isoprenylcysteine alpha-carbonyl methylesterase ICME (IMCE) from Oryza sativa subsp. japonica (Rice).